We begin with the raw amino-acid sequence, 550 residues long: Hydroxylamine reductase (550 aa).

The [2Fe-2S] cluster site is built by cysteine 3, cysteine 6, cysteine 18, and cysteine 25. Residues histidine 249, glutamate 273, cysteine 317, cysteine 405, cysteine 433, cysteine 458, glutamate 492, and lysine 494 each coordinate hybrid [4Fe-2O-2S] cluster. Cysteine persulfide is present on cysteine 405.

The protein belongs to the HCP family. [2Fe-2S] cluster serves as cofactor. Hybrid [4Fe-2O-2S] cluster is required as a cofactor.

The protein resides in the cytoplasm. The catalysed reaction is A + NH4(+) + H2O = hydroxylamine + AH2 + H(+). In terms of biological role, catalyzes the reduction of hydroxylamine to form NH(3) and H(2)O. The sequence is that of Hydroxylamine reductase from Escherichia coli (strain SMS-3-5 / SECEC).